The following is an 87-amino-acid chain: Cobalt transport protein CbiN (87 aa).

The next 2 helical transmembrane spans lie at 4–24 and 58–78; these read LLLL…EWAG and MLFS…LGYY.

The protein belongs to the CbiN family. Forms an energy-coupling factor (ECF) transporter complex composed of an ATP-binding protein (A component, CbiO), a transmembrane protein (T component, CbiQ) and 2 possible substrate-capture proteins (S components, CbiM and CbiN) of unknown stoichimetry.

The protein localises to the cell membrane. Its pathway is cofactor biosynthesis; adenosylcobalamin biosynthesis. Functionally, part of the energy-coupling factor (ECF) transporter complex CbiMNOQ involved in cobalt import. The sequence is that of Cobalt transport protein CbiN from Archaeoglobus fulgidus (strain ATCC 49558 / DSM 4304 / JCM 9628 / NBRC 100126 / VC-16).